The chain runs to 228 residues: Protein-L-isoaspartate O-methyltransferase (228 aa).

The interval 1–20 is disordered; the sequence is MVAVSLKMSQPAAPPPPMGE. Residue S76 is part of the active site.

Belongs to the methyltransferase superfamily. L-isoaspartyl/D-aspartyl protein methyltransferase family.

Its subcellular location is the cytoplasm. The enzyme catalyses [protein]-L-isoaspartate + S-adenosyl-L-methionine = [protein]-L-isoaspartate alpha-methyl ester + S-adenosyl-L-homocysteine. Functionally, catalyzes the methyl esterification of L-isoaspartyl residues in peptides and proteins that result from spontaneous decomposition of normal L-aspartyl and L-asparaginyl residues. It plays a role in the repair and/or degradation of damaged proteins. The chain is Protein-L-isoaspartate O-methyltransferase from Magnetococcus marinus (strain ATCC BAA-1437 / JCM 17883 / MC-1).